A 454-amino-acid chain; its full sequence is UPF0210 protein BAD_1323 (454 aa).

The protein belongs to the UPF0210 family. In terms of assembly, homodimer.

This chain is UPF0210 protein BAD_1323, found in Bifidobacterium adolescentis (strain ATCC 15703 / DSM 20083 / NCTC 11814 / E194a).